A 301-amino-acid chain; its full sequence is Bifunctional protein FolD (301 aa).

Residues 166–168 (GKS), serine 191, and isoleucine 232 contribute to the NADP(+) site.

This sequence belongs to the tetrahydrofolate dehydrogenase/cyclohydrolase family. Homodimer.

The enzyme catalyses (6R)-5,10-methylene-5,6,7,8-tetrahydrofolate + NADP(+) = (6R)-5,10-methenyltetrahydrofolate + NADPH. It carries out the reaction (6R)-5,10-methenyltetrahydrofolate + H2O = (6R)-10-formyltetrahydrofolate + H(+). Its pathway is one-carbon metabolism; tetrahydrofolate interconversion. Its function is as follows. Catalyzes the oxidation of 5,10-methylenetetrahydrofolate to 5,10-methenyltetrahydrofolate and then the hydrolysis of 5,10-methenyltetrahydrofolate to 10-formyltetrahydrofolate. This chain is Bifunctional protein FolD, found in Orientia tsutsugamushi (strain Boryong) (Rickettsia tsutsugamushi).